Consider the following 174-residue polypeptide: Shikimate kinase 2 (174 aa).

Residue 12-17 (GCGKTT) coordinates ATP. Residues Thr16 and Asp32 each contribute to the Mg(2+) site. Substrate contacts are provided by Asp34, Arg58, and Gly79. The segment at 112–126 (RAYPEDDQRPSLTGK) is LID domain. Arg120 serves as a coordination point for ATP. Position 139 (Arg139) interacts with substrate. Gln155 provides a ligand contact to ATP.

It belongs to the shikimate kinase family. AroL subfamily. In terms of assembly, monomer. Requires Mg(2+) as cofactor.

It localises to the cytoplasm. It carries out the reaction shikimate + ATP = 3-phosphoshikimate + ADP + H(+). The protein operates within metabolic intermediate biosynthesis; chorismate biosynthesis; chorismate from D-erythrose 4-phosphate and phosphoenolpyruvate: step 5/7. In terms of biological role, catalyzes the specific phosphorylation of the 3-hydroxyl group of shikimic acid using ATP as a cosubstrate. The protein is Shikimate kinase 2 of Sodalis glossinidius (strain morsitans).